The sequence spans 143 residues: Acyl carrier protein 3, chloroplastic (143 aa).

The transit peptide at 1-60 (MATAAAGSSLICIKSASCSLNRAQVPSGLSSLRSVSLPISGKIFPSLRSSRGPLSFRVCC) directs the protein to the chloroplast. Residues 64 to 139 (QETVTRVCEI…DAADLIEKLV (76 aa)) form the Carrier domain. At serine 99 the chain carries O-(pantetheine 4'-phosphoryl)serine.

It belongs to the acyl carrier protein (ACP) family. Post-translationally, 4'-phosphopantetheine is transferred from CoA to a specific serine of apo-ACP by acpS. This modification is essential for activity because fatty acids are bound in thioester linkage to the sulfhydryl of the prosthetic group.

The protein localises to the plastid. It is found in the chloroplast. Its pathway is lipid metabolism; fatty acid biosynthesis. Carrier of the growing fatty acid chain in fatty acid biosynthesis. The polypeptide is Acyl carrier protein 3, chloroplastic (ACL1.3) (Cuphea lanceolata (Cigar flower)).